Here is a 312-residue protein sequence, read N- to C-terminus: Tumor necrosis factor receptor type 1-associated DEATH domain protein (312 aa).

The short motif at 147–163 is the Nuclear export signal element; the sequence is LRDEELAELEDALRNLK. Residues 170–195 are disordered; the sequence is GGDGEVASAPLQPPVPSLSEVKPPPP. The Death domain maps to 179 to 289; that stretch reads PLQPPVPSLS…ATLQRLVEAL (111 aa). The segment covering 180–195 has biased composition (pro residues); that stretch reads LQPPVPSLSEVKPPPP. Positions 222 to 289 are interaction with KRT14 and KRT18; that stretch reads FARSVGLKWR…ATLQRLVEAL (68 aa). The Nuclear localization signal motif lies at 231–244; it reads RKVGRSLQRGCRAL. Residues arginine 235 and arginine 245 are each glycosylated ((Microbial infection) N-beta-linked (GlcNAc) arginine).

Stimulation of TNF-alpha receptor TNFRSF1A leads to the formation of two distinct signaling complexes. Plasma membrane-bound complex I is composed of TNFRSF1A, TRADD, RIPK1, TRAF2 and BIRC2/c-IAP1 or BIRC3 which interacts with CHUCK/IKK-alpha, IKBKB/IKK-beta and IKBKG/IKK-gamma promoting cell survival. Subsequently, TRADD, RIPK1 and TRAF2 dissociate from TNFRSF1A and form cytoplasmic complex II with FADD and caspase CASP8 promoting cell apoptosis. Within complex I, interacts with TNFRSF1A/TNFR1, TRAF2 and kinase RIPK1. Within complex I, interacts with TRPC4AP; the interaction promotes NF-kappa B activation. UXT1 associates with complex I; the interaction prevents the formation of complex II. Within complex I Interacts with scaffold protein DAB2IP. Interacts with autophagy receptor SQSTM1. Interacts with E3 ligase TRIP12. Interacts with kinase HIPK2. Interacts with keratin KRT14. Interacts with keratin KRT18. Interacts with keratins KRT16 and KRT17. Interacts with FADD. Interacts with TOMM70. Interacts with TMC8; the interaction impairs the formation of complex I and facilites complex II formation. Post-translationally, (Microbial infection) Glycosylated at Arg-235 by enteropathogenic E.coli protein NleB1, C.rodentium protein NleB and S.typhimurium proteins Ssek1 and Ssek3: arginine GlcNAcylation prevents homotypic/heterotypic death domain interactions and assembly of the oligomeric TNFRSF1A/TNFR1 complex, thereby disrupting TNF signaling. As to expression, found in all examined tissues.

It is found in the nucleus. The protein resides in the cytoplasm. It localises to the cytoskeleton. Functionally, adapter molecule for TNFRSF1A/TNFR1 that specifically associates with the cytoplasmic domain of activated TNFRSF1A/TNFR1 mediating its interaction with FADD. Overexpression of TRADD leads to two major TNF-induced responses, apoptosis and activation of NF-kappa-B. The nuclear form acts as a tumor suppressor by preventing ubiquitination and degradation of isoform p19ARF/ARF of CDKN2A by TRIP12: acts by interacting with TRIP12, leading to disrupt interaction between TRIP12 and isoform p19ARF/ARF of CDKN2A. The protein is Tumor necrosis factor receptor type 1-associated DEATH domain protein of Homo sapiens (Human).